Consider the following 676-residue polypeptide: ATP-dependent zinc metalloprotease FtsH (676 aa).

The Cytoplasmic portion of the chain corresponds to Met-1 to His-12. Residues Met-13 to Thr-33 form a helical membrane-spanning segment. Residues Lys-34–His-115 lie on the Extracellular side of the membrane. Residues Val-116 to Phe-136 traverse the membrane as a helical segment. The Cytoplasmic portion of the chain corresponds to Ala-137–Thr-676. Residue Gly-212–Thr-219 participates in ATP binding. Residue His-433 coordinates Zn(2+). Glu-434 is an active-site residue. Zn(2+) is bound by residues His-437 and Asp-509. Residues Glu-610 to Thr-676 are disordered. Positions Asn-615 to Thr-636 are enriched in polar residues. Residues Asn-650 to Glu-667 show a composition bias toward low complexity.

This sequence in the central section; belongs to the AAA ATPase family. The protein in the C-terminal section; belongs to the peptidase M41 family. As to quaternary structure, homohexamer. It depends on Zn(2+) as a cofactor.

It localises to the cell membrane. Functionally, acts as a processive, ATP-dependent zinc metallopeptidase for both cytoplasmic and membrane proteins. Plays a role in the quality control of integral membrane proteins. This Aster yellows witches'-broom phytoplasma (strain AYWB) protein is ATP-dependent zinc metalloprotease FtsH.